Consider the following 477-residue polypeptide: Regulatory protein HrpB (477 aa).

One can recognise an HTH araC/xylS-type domain in the interval 375 to 477 (RRAYRYIIEN…NEAPSETIWR (103 aa)). DNA-binding regions (H-T-H motif) lie at residues 393 to 414 (REVA…KSAV) and 444 to 467 (IIDT…RKQF).

Functionally, positive regulation of hypersensitive response genes involved in plant pathogenicity and partly of its own synthesis in minimal medium. This is Regulatory protein HrpB (hrpB) from Ralstonia nicotianae (strain ATCC BAA-1114 / GMI1000) (Ralstonia solanacearum).